Reading from the N-terminus, the 443-residue chain is Tol-Pal system protein TolB (443 aa).

Residues 1–31 (MTRLAKGKWRSTLGAMMALAVMVAAIPQARA) form the signal peptide. A compositionally biased stretch (polar residues) spans 423–432 (NERQISTPTE). The tract at residues 423 to 443 (NERQISTPTEASDPAWSPLLP) is disordered.

This sequence belongs to the TolB family. The Tol-Pal system is composed of five core proteins: the inner membrane proteins TolA, TolQ and TolR, the periplasmic protein TolB and the outer membrane protein Pal. They form a network linking the inner and outer membranes and the peptidoglycan layer.

Its subcellular location is the periplasm. Its function is as follows. Part of the Tol-Pal system, which plays a role in outer membrane invagination during cell division and is important for maintaining outer membrane integrity. The protein is Tol-Pal system protein TolB of Rhodospirillum rubrum (strain ATCC 11170 / ATH 1.1.1 / DSM 467 / LMG 4362 / NCIMB 8255 / S1).